Consider the following 276-residue polypeptide: Rhamnulose-1-phosphate aldolase (276 aa).

Glu117 is an active-site residue. Residues His141, His143, and His212 each contribute to the Zn(2+) site.

The protein belongs to the aldolase class II family. RhaD subfamily. In terms of assembly, homotetramer. Zn(2+) is required as a cofactor.

It localises to the cytoplasm. The catalysed reaction is L-rhamnulose 1-phosphate = (S)-lactaldehyde + dihydroxyacetone phosphate. The protein operates within carbohydrate degradation; L-rhamnose degradation; glycerone phosphate from L-rhamnose: step 3/3. Functionally, catalyzes the reversible cleavage of L-rhamnulose-1-phosphate to dihydroxyacetone phosphate (DHAP) and L-lactaldehyde. The protein is Rhamnulose-1-phosphate aldolase of Klebsiella pneumoniae (strain 342).